The sequence spans 202 residues: Nitrophorin-3 (202 aa).

Residues 1 to 23 (MEPYSALLAVTILCLTSTMGVSG) form the signal peptide. Disulfide bonds link Cys-25–Cys-144 and Cys-62–Cys-193. His-80 is a binding site for heme.

This sequence belongs to the calycin superfamily. Nitrophorin family. Interacts weakly with host coagulation factor IX (F9) (inactive and activated) in the presence of Ca(2+). In terms of tissue distribution, salivary gland (at protein level).

It is found in the secreted. Heme-based protein that deliver nitric oxide gas (NO) to the victim while feeding, resulting in vasodilation and inhibition of platelet aggregation. Reversibly binds nitric oxide (NO). Also binds tightly to histamine, which is released by the host to induce wound healing. Exhibits weak anticoagulant activity. This Rhodnius prolixus (Triatomid bug) protein is Nitrophorin-3.